Here is a 256-residue protein sequence, read N- to C-terminus: Stanniocalcin (256 aa).

The first 18 residues, 1-18 (MLAKFGLCAVFLVLGTAA), serve as a signal peptide directing secretion. Positions 19-33 (TFDTDPEEASPRRAR) are excised as a propeptide. The N-linked (GlcNAc...) asparagine glycan is linked to N62.

Belongs to the stanniocalcin family. As to quaternary structure, homodimer; disulfide-linked. Produced and secreted by the corpuscles of Stannius.

Its subcellular location is the secreted. Its function is as follows. Its primary function is the prevention of hypercalcemia. Upon release into the circulation, it lowers calcium transport by the gills, thereby reducing its rate of influx from the environment into the extracellular compartment. STC also stimulates phosphate reabsorption by renal proximal tubules. The consequence of this action is increased levels of plasma phosphate, which combines with excess calcium and promotes its disposal into bone and scales. In Oncorhynchus kisutch (Coho salmon), this protein is Stanniocalcin (stc).